We begin with the raw amino-acid sequence, 62 residues long: Probable tautomerase RSc0807 (62 aa).

Pro-2 (proton acceptor; via imino nitrogen) is an active-site residue.

This sequence belongs to the 4-oxalocrotonate tautomerase family.

This chain is Probable tautomerase RSc0807, found in Ralstonia nicotianae (strain ATCC BAA-1114 / GMI1000) (Ralstonia solanacearum).